Reading from the N-terminus, the 779-residue chain is Endonuclease MutS2 (779 aa).

328-335 (GPNTGGKT) serves as a coordination point for ATP. Positions 704–779 (LDLRGKRYEE…GSGATIVTLG (76 aa)) constitute a Smr domain.

The protein belongs to the DNA mismatch repair MutS family. MutS2 subfamily. As to quaternary structure, homodimer. Binds to stalled ribosomes, contacting rRNA.

Its function is as follows. Endonuclease that is involved in the suppression of homologous recombination and thus may have a key role in the control of bacterial genetic diversity. Functionally, acts as a ribosome collision sensor, splitting the ribosome into its 2 subunits. Detects stalled/collided 70S ribosomes which it binds and splits by an ATP-hydrolysis driven conformational change. Acts upstream of the ribosome quality control system (RQC), a ribosome-associated complex that mediates the extraction of incompletely synthesized nascent chains from stalled ribosomes and their subsequent degradation. Probably generates substrates for RQC. The polypeptide is Endonuclease MutS2 (Streptococcus pyogenes serotype M49 (strain NZ131)).